A 480-amino-acid chain; its full sequence is Glycogen synthase (480 aa).

Residue Lys15 participates in ADP-alpha-D-glucose binding.

Belongs to the glycosyltransferase 1 family. Bacterial/plant glycogen synthase subfamily.

It carries out the reaction [(1-&gt;4)-alpha-D-glucosyl](n) + ADP-alpha-D-glucose = [(1-&gt;4)-alpha-D-glucosyl](n+1) + ADP + H(+). Its pathway is glycan biosynthesis; glycogen biosynthesis. Synthesizes alpha-1,4-glucan chains using ADP-glucose. The chain is Glycogen synthase from Opitutus terrae (strain DSM 11246 / JCM 15787 / PB90-1).